Consider the following 696-residue polypeptide: Methionine--tRNA ligase (696 aa).

The 'HIGH' region motif lies at 12–22 (PYANGAIHLGH). Zn(2+) is bound by residues C143, C146, C156, and C159. Residues 336 to 340 (KMSKS) carry the 'KMSKS' region motif. K339 provides a ligand contact to ATP. The segment at 556–580 (SLAPAPEAQSQQRHAEHQQNEVTAE) is disordered. One can recognise a tRNA-binding domain in the interval 591–696 (DFMKVDLRIV…SGAQPGMRVK (106 aa)).

Belongs to the class-I aminoacyl-tRNA synthetase family. MetG type 1 subfamily. Homodimer. Zn(2+) serves as cofactor.

It localises to the cytoplasm. It carries out the reaction tRNA(Met) + L-methionine + ATP = L-methionyl-tRNA(Met) + AMP + diphosphate. Its function is as follows. Is required not only for elongation of protein synthesis but also for the initiation of all mRNA translation through initiator tRNA(fMet) aminoacylation. This chain is Methionine--tRNA ligase, found in Dechloromonas aromatica (strain RCB).